The chain runs to 214 residues: Adenylate kinase (214 aa).

10 to 15 provides a ligand contact to ATP; that stretch reads GAGKGT. The segment at 30-59 is NMP; that stretch reads STGDMFRDHKARGTEIGKQVQAIMDAGGLV. Residues T31, R36, 57–59, 85–88, and Q92 each bind AMP; these read GLV and GYPR. Residues 126–163 form an LID region; sequence GRRSCPRCGAVYHVSQNPPHRAGFCDRDDTALVQREDD. R127 is an ATP binding site. Zn(2+)-binding residues include C130 and C133. 136-137 provides a ligand contact to ATP; it reads VY. Residues C150 and D153 each coordinate Zn(2+). Positions 160 and 171 each coordinate AMP. G199 contacts ATP.

This sequence belongs to the adenylate kinase family. In terms of assembly, monomer.

Its subcellular location is the cytoplasm. The enzyme catalyses AMP + ATP = 2 ADP. It functions in the pathway purine metabolism; AMP biosynthesis via salvage pathway; AMP from ADP: step 1/1. Catalyzes the reversible transfer of the terminal phosphate group between ATP and AMP. Plays an important role in cellular energy homeostasis and in adenine nucleotide metabolism. The protein is Adenylate kinase of Anaeromyxobacter sp. (strain K).